A 119-amino-acid polypeptide reads, in one-letter code: Chorion class B protein M2807 (119 aa).

The interval 1–11 is left arm; that stretch reads GGLGGGCGRGF. The interval 12 to 80 is central domain; sequence SGGGLPVATA…GNGAVGITRE (69 aa). The right arm (Gly-rich tandem repeats) stretch occupies residues 81–119; it reads GGLGYGAGYGDGYGLGYGGYGGGYGLGYGGYGGCGCGCG.

Belongs to the chorion protein family.

Functionally, this protein is one of many from the eggshell of the silk moth. The sequence is that of Chorion class B protein M2807 from Bombyx mori (Silk moth).